The chain runs to 218 residues: Chromophore lyase CpcT/CpeT 1 (218 aa).

This sequence belongs to the CpcT/CpeT biliprotein lyase family.

In terms of biological role, covalently attaches a chromophore to Cys residue(s) of phycobiliproteins. The chain is Chromophore lyase CpcT/CpeT 1 from Synechococcus sp. (strain JA-3-3Ab) (Cyanobacteria bacterium Yellowstone A-Prime).